Here is a 346-residue protein sequence, read N- to C-terminus: Uroporphyrinogen decarboxylase (346 aa).

Substrate-binding positions include 26 to 30 (RQAGR), aspartate 76, tyrosine 153, serine 208, and histidine 323.

This sequence belongs to the uroporphyrinogen decarboxylase family. In terms of assembly, homodimer.

Its subcellular location is the cytoplasm. The enzyme catalyses uroporphyrinogen III + 4 H(+) = coproporphyrinogen III + 4 CO2. Its pathway is porphyrin-containing compound metabolism; protoporphyrin-IX biosynthesis; coproporphyrinogen-III from 5-aminolevulinate: step 4/4. In terms of biological role, catalyzes the decarboxylation of four acetate groups of uroporphyrinogen-III to yield coproporphyrinogen-III. In Prochlorococcus marinus (strain MIT 9515), this protein is Uroporphyrinogen decarboxylase.